The chain runs to 231 residues: ATP phosphoribosyltransferase (231 aa).

Belongs to the ATP phosphoribosyltransferase family. Short subfamily. As to quaternary structure, heteromultimer composed of HisG and HisZ subunits.

Its subcellular location is the cytoplasm. It catalyses the reaction 1-(5-phospho-beta-D-ribosyl)-ATP + diphosphate = 5-phospho-alpha-D-ribose 1-diphosphate + ATP. Its pathway is amino-acid biosynthesis; L-histidine biosynthesis; L-histidine from 5-phospho-alpha-D-ribose 1-diphosphate: step 1/9. Catalyzes the condensation of ATP and 5-phosphoribose 1-diphosphate to form N'-(5'-phosphoribosyl)-ATP (PR-ATP). Has a crucial role in the pathway because the rate of histidine biosynthesis seems to be controlled primarily by regulation of HisG enzymatic activity. This Brucella suis (strain ATCC 23445 / NCTC 10510) protein is ATP phosphoribosyltransferase.